We begin with the raw amino-acid sequence, 358 residues long: Phospho-N-acetylmuramoyl-pentapeptide-transferase (358 aa).

10 helical membrane passes run 3–23 (QILF…PALI), 54–74 (GVAI…IGIA), 84–104 (ALLV…DDFI), 114–134 (LTAA…GVLA), 156–176 (ITTV…VVVA), 187–207 (LDGL…IITF), 231–251 (LALV…WNAA), 255–275 (IFMG…LSIT), 283–303 (VVIG…VAVF), and 330–350 (VIIR…GLFY).

This sequence belongs to the glycosyltransferase 4 family. MraY subfamily. Mg(2+) serves as cofactor.

The protein localises to the cell membrane. The catalysed reaction is UDP-N-acetyl-alpha-D-muramoyl-L-alanyl-gamma-D-glutamyl-meso-2,6-diaminopimeloyl-D-alanyl-D-alanine + di-trans,octa-cis-undecaprenyl phosphate = di-trans,octa-cis-undecaprenyl diphospho-N-acetyl-alpha-D-muramoyl-L-alanyl-D-glutamyl-meso-2,6-diaminopimeloyl-D-alanyl-D-alanine + UMP. Its pathway is cell wall biogenesis; peptidoglycan biosynthesis. In terms of biological role, catalyzes the initial step of the lipid cycle reactions in the biosynthesis of the cell wall peptidoglycan: transfers peptidoglycan precursor phospho-MurNAc-pentapeptide from UDP-MurNAc-pentapeptide onto the lipid carrier undecaprenyl phosphate, yielding undecaprenyl-pyrophosphoryl-MurNAc-pentapeptide, known as lipid I. The polypeptide is Phospho-N-acetylmuramoyl-pentapeptide-transferase (Nocardia farcinica (strain IFM 10152)).